The following is a 138-amino-acid chain: Large ribosomal subunit protein uL16 (138 aa).

The span at 1-16 (MLIPRRVKHRKQHHPG) shows a compositional bias: basic residues. The segment at 1–24 (MLIPRRVKHRKQHHPGRSGAATGG) is disordered.

The protein belongs to the universal ribosomal protein uL16 family. In terms of assembly, part of the 50S ribosomal subunit.

Binds 23S rRNA and is also seen to make contacts with the A and possibly P site tRNAs. The polypeptide is Large ribosomal subunit protein uL16 (Paenarthrobacter aurescens (strain TC1)).